The following is a 279-amino-acid chain: DegV domain-containing protein spr1019 (279 aa).

Residues 4–277 (IKIVTDSSVT…ENAWAILIRY (274 aa)) form the DegV domain. Thr62 and Ser94 together coordinate hexadecanoate.

Its function is as follows. May bind long-chain fatty acids, such as palmitate, and may play a role in lipid transport or fatty acid metabolism. In Streptococcus pneumoniae (strain ATCC BAA-255 / R6), this protein is DegV domain-containing protein spr1019.